The chain runs to 678 residues: DNA ligase (678 aa).

Residues Asp-47 to Asp-51, Ser-96 to Leu-97, and Glu-122 each bind NAD(+). The active-site N6-AMP-lysine intermediate is the Lys-124. 4 residues coordinate NAD(+): Arg-145, Glu-182, Lys-300, and Lys-324. Zn(2+) is bound by residues Cys-418, Cys-421, Cys-436, and Cys-442. Positions Ala-602–Leu-678 constitute a BRCT domain.

It belongs to the NAD-dependent DNA ligase family. LigA subfamily. It depends on Mg(2+) as a cofactor. Mn(2+) serves as cofactor.

The catalysed reaction is NAD(+) + (deoxyribonucleotide)n-3'-hydroxyl + 5'-phospho-(deoxyribonucleotide)m = (deoxyribonucleotide)n+m + AMP + beta-nicotinamide D-nucleotide.. Functionally, DNA ligase that catalyzes the formation of phosphodiester linkages between 5'-phosphoryl and 3'-hydroxyl groups in double-stranded DNA using NAD as a coenzyme and as the energy source for the reaction. It is essential for DNA replication and repair of damaged DNA. The sequence is that of DNA ligase from Francisella philomiragia subsp. philomiragia (strain ATCC 25017 / CCUG 19701 / FSC 153 / O#319-036).